The following is a 216-amino-acid chain: Invasion protein InvF (216 aa).

The HTH araC/xylS-type domain occupies 112-210 (YWLVGYLLAQ…GVSPRKLSNI (99 aa)). 2 consecutive DNA-binding regions (H-T-H motif) follow at residues 129 to 150 (RMLG…SRAL) and 177 to 200 (ITQL…KELI).

Transcriptional regulator required for the expression of several genes encoding type III secretion system SPI1 effector proteins. The interaction with SicA is necessary for the activation of sigDE (sopB pipC), sicAsipBCDA, and sopE. This is Invasion protein InvF (invF) from Salmonella typhi.